The chain runs to 108 residues: Mitochondrial pyruvate carrier 3 (108 aa).

The next 3 helical transmembrane spans lie at 19 to 35 (IHFW…IANI), 51 to 67 (IVIT…STVI), and 74 to 90 (LFSV…YQLT).

This sequence belongs to the mitochondrial pyruvate carrier (MPC) (TC 2.A.105) family. Abundant in leaf and particularly in the guard cells.

It localises to the mitochondrion. It is found in the mitochondrion inner membrane. In terms of biological role, mediates the uptake of pyruvate into mitochondria. Negatively regulates ABA-induced guard cell signaling and mediates drought stress responses. This is Mitochondrial pyruvate carrier 3 from Arabidopsis thaliana (Mouse-ear cress).